The following is an 800-amino-acid chain: N,N'-diacetylchitobiose phosphorylase (800 aa).

Positions 333, 343, 349, 350, 490, and 492 each coordinate N-acetyl-alpha-D-glucosamine 1-phosphate. Asp-492 acts as the Proton donor in catalysis. Positions 492, 636, and 637 each coordinate N-acetyl-D-glucosamine. N-acetyl-alpha-D-glucosamine 1-phosphate contacts are provided by Glu-637, His-644, Gln-690, Thr-709, and Gly-710.

Belongs to the glycosyl hydrolase 94 family. Homodimer.

It catalyses the reaction N,N'-diacetylchitobiose + phosphate = N-acetyl-alpha-D-glucosamine 1-phosphate + N-acetyl-D-glucosamine. In terms of biological role, catalyzes the reversible phosphorolysis of chitobiose (N,N'-diacetylchitobiose or (GlcNAc)(2)) into N-acetyl-alpha-D-glucosamine 1-phosphate (GlcNAc-1-P) and N-acetyl-D-glucosamine (GlcNAc) with inversion of the anomeric configuration. The polypeptide is N,N'-diacetylchitobiose phosphorylase (Vibrio furnissii).